A 167-amino-acid chain; its full sequence is S-ribosylhomocysteine lyase (167 aa).

Fe cation is bound by residues histidine 54, histidine 58, and cysteine 128.

It belongs to the LuxS family. As to quaternary structure, homodimer. It depends on Fe cation as a cofactor.

It carries out the reaction S-(5-deoxy-D-ribos-5-yl)-L-homocysteine = (S)-4,5-dihydroxypentane-2,3-dione + L-homocysteine. Functionally, involved in the synthesis of autoinducer 2 (AI-2) which is secreted by bacteria and is used to communicate both the cell density and the metabolic potential of the environment. The regulation of gene expression in response to changes in cell density is called quorum sensing. Catalyzes the transformation of S-ribosylhomocysteine (RHC) to homocysteine (HC) and 4,5-dihydroxy-2,3-pentadione (DPD). The protein is S-ribosylhomocysteine lyase of Haemophilus influenzae (strain PittEE).